The chain runs to 264 residues: 3-methyl-2-oxobutanoate hydroxymethyltransferase 1 (264 aa).

Mg(2+) is bound by residues Asp-45 and Asp-84. 3-methyl-2-oxobutanoate-binding positions include 45–46, Asp-84, and Lys-112; that span reads DS. A Mg(2+)-binding site is contributed by Glu-114. The Proton acceptor role is filled by Glu-181.

The protein belongs to the PanB family. As to quaternary structure, homodecamer; pentamer of dimers. The cofactor is Mg(2+).

It localises to the cytoplasm. The enzyme catalyses 3-methyl-2-oxobutanoate + (6R)-5,10-methylene-5,6,7,8-tetrahydrofolate + H2O = 2-dehydropantoate + (6S)-5,6,7,8-tetrahydrofolate. It participates in cofactor biosynthesis; (R)-pantothenate biosynthesis; (R)-pantoate from 3-methyl-2-oxobutanoate: step 1/2. In terms of biological role, catalyzes the reversible reaction in which hydroxymethyl group from 5,10-methylenetetrahydrofolate is transferred onto alpha-ketoisovalerate to form ketopantoate. The sequence is that of 3-methyl-2-oxobutanoate hydroxymethyltransferase 1 from Aliivibrio fischeri (strain ATCC 700601 / ES114) (Vibrio fischeri).